A 340-amino-acid chain; its full sequence is Phenylalanine--tRNA ligase alpha subunit (340 aa).

A Mg(2+)-binding site is contributed by glutamate 255.

This sequence belongs to the class-II aminoacyl-tRNA synthetase family. Phe-tRNA synthetase alpha subunit type 1 subfamily. Tetramer of two alpha and two beta subunits. Mg(2+) is required as a cofactor.

The protein resides in the cytoplasm. The catalysed reaction is tRNA(Phe) + L-phenylalanine + ATP = L-phenylalanyl-tRNA(Phe) + AMP + diphosphate + H(+). The chain is Phenylalanine--tRNA ligase alpha subunit from Desulforamulus reducens (strain ATCC BAA-1160 / DSM 100696 / MI-1) (Desulfotomaculum reducens).